The primary structure comprises 427 residues: Beta-porphyranase D (427 aa).

The first 19 residues, 1–19 (MILKQAILTLVLVNANLFA), serve as a signal peptide directing secretion. Residues 23-45 (PKTYSSTDKETRQGPPKPPMGKR) are disordered. One can recognise a GH16 domain in the interval 32–308 (ETRQGPPKPP…WVRAYRLVDV (277 aa)). Residues tryptophan 73, arginine 76, glutamate 168, glutamate 173, and glutamate 272 each coordinate substrate. The Nucleophile role is filled by glutamate 168. Catalysis depends on glutamate 173, which acts as the Proton donor.

Belongs to the glycosyl hydrolase 16 family.

It localises to the periplasm. It carries out the reaction Hydrolysis of beta-D-galactopyranose-(1-&gt;4)-alpha-L-galactopyranose-6-sulfate linkages in porphyran.. In terms of biological role, cleaves the sulfated polysaccharide porphyran at the (1-&gt;4) linkages between beta-D-galactopyranose and alpha-L-galactopyranose-6-sulfate, forming mostly the disaccharide alpha-L-galactopyranose-6-sulfate-(1-&gt;3)-beta-D-galactose. The polypeptide is Beta-porphyranase D (porD) (Zobellia galactanivorans (strain DSM 12802 / CCUG 47099 / CIP 106680 / NCIMB 13871 / Dsij)).